A 177-amino-acid chain; its full sequence is Large ribosomal subunit protein uL6 (177 aa).

K44 is modified (N6-acetyllysine).

This sequence belongs to the universal ribosomal protein uL6 family. In terms of assembly, part of the 50S ribosomal subunit.

Its function is as follows. This protein binds to the 23S rRNA, and is important in its secondary structure. It is located near the subunit interface in the base of the L7/L12 stalk, and near the tRNA binding site of the peptidyltransferase center. This Shigella sonnei (strain Ss046) protein is Large ribosomal subunit protein uL6.